The following is a 357-amino-acid chain: Chorismate synthase (357 aa).

Arg47 lines the NADP(+) pocket. FMN-binding positions include 123–125 (RSS), Gly281, 296–300 (KPTSS), and Arg324.

The protein belongs to the chorismate synthase family. In terms of assembly, homotetramer. FMNH2 serves as cofactor.

It carries out the reaction 5-O-(1-carboxyvinyl)-3-phosphoshikimate = chorismate + phosphate. It functions in the pathway metabolic intermediate biosynthesis; chorismate biosynthesis; chorismate from D-erythrose 4-phosphate and phosphoenolpyruvate: step 7/7. In terms of biological role, catalyzes the anti-1,4-elimination of the C-3 phosphate and the C-6 proR hydrogen from 5-enolpyruvylshikimate-3-phosphate (EPSP) to yield chorismate, which is the branch point compound that serves as the starting substrate for the three terminal pathways of aromatic amino acid biosynthesis. This reaction introduces a second double bond into the aromatic ring system. The protein is Chorismate synthase of Chlamydia muridarum (strain MoPn / Nigg).